A 244-amino-acid polypeptide reads, in one-letter code: ATP synthase subunit 4, mitochondrial (244 aa).

Residues 1 to 36 (MASRLAKSAICAARVRPVLSSRTIPAAATTLTSTRS) constitute a mitochondrion transit peptide.

The protein belongs to the eukaryotic ATPase B chain family. In terms of assembly, F-type ATPases have 2 components, CF(1) - the catalytic core - and CF(0) - the membrane proton channel. In yeast, the dimeric form of ATP synthase consists of 17 polypeptides: alpha, beta, gamma, delta, epsilon, 4 (B), 5 (OSCP), 6 (A), 8, 9 (C), d, E (Tim11), f, g, h, i/j and k.

It localises to the mitochondrion. It is found in the mitochondrion inner membrane. In terms of biological role, mitochondrial membrane ATP synthase (F(1)F(0) ATP synthase or Complex V) produces ATP from ADP in the presence of a proton gradient across the membrane which is generated by electron transport complexes of the respiratory chain. F-type ATPases consist of two structural domains, F(1) - containing the extramembraneous catalytic core, and F(0) - containing the membrane proton channel, linked together by a central stalk and a peripheral stalk. During catalysis, ATP synthesis in the catalytic domain of F(1) is coupled via a rotary mechanism of the central stalk subunits to proton translocation. Part of the complex F(0) domain and the peripheric stalk, which acts as a stator to hold the catalytic alpha(3)beta(3) subcomplex and subunit a/ATP6 static relative to the rotary elements. In Paracoccidioides brasiliensis, this protein is ATP synthase subunit 4, mitochondrial (ATP4).